Consider the following 290-residue polypeptide: 4-hydroxy-tetrahydrodipicolinate synthase (290 aa).

A pyruvate-binding site is contributed by Thr-44. Tyr-132 (proton donor/acceptor) is an active-site residue. The Schiff-base intermediate with substrate role is filled by Lys-160. Residue Ile-202 participates in pyruvate binding.

This sequence belongs to the DapA family. Homotetramer; dimer of dimers.

Its subcellular location is the cytoplasm. The enzyme catalyses L-aspartate 4-semialdehyde + pyruvate = (2S,4S)-4-hydroxy-2,3,4,5-tetrahydrodipicolinate + H2O + H(+). It participates in amino-acid biosynthesis; L-lysine biosynthesis via DAP pathway; (S)-tetrahydrodipicolinate from L-aspartate: step 3/4. Its function is as follows. Catalyzes the condensation of (S)-aspartate-beta-semialdehyde [(S)-ASA] and pyruvate to 4-hydroxy-tetrahydrodipicolinate (HTPA). The polypeptide is 4-hydroxy-tetrahydrodipicolinate synthase (Geobacter sulfurreducens (strain ATCC 51573 / DSM 12127 / PCA)).